Reading from the N-terminus, the 2083-residue chain is MDSNRPAVLLFGDVTDPWVDGIDYVYSQAATTPWLRSFLRDLFTVLKVEMRTMDRTLQESFRDCGSFQELAERYRHTGDDFGMAHAMLTYVIRAVVLLETISAEPHLLDSNRPRPELIGVSGGLFSAAVVSVSTNFQSLYDTCLEAGRVWARLCNLTLVKSRAIEERPGTWGWAVLGIPAGKLSQTLEQFQNDMGVPSAKRARVGVTGDRWSTVIGPPSILELVLNECPTLKNLPKNELDIHALQHTLDISNADIDYIVGDSSLLDTPLPQGYRIYGLDDDRPEATYPSWSHLLRASASQTLARPLNIVQAVSKLNAALGTSTHVDFKIMGPSSHAAYIAKVLQTAGREVSLQDRITAKPPTPDSRDGIAIVGMAGKGPGSDDLEEFWDVLLKGLDLHQEVPPDRYDLDEYYSPKHPPAGPGKCTMTCRHGCFMNNPGHFDSKFFHISPREALLMDPAHRLFLMNAYEALEMAGYSDGQTKMTDPTKIATFFGQCNDDWHVVGHRTLGCDAYTLQAVQRAFGPGRLAFQFNWEGPTYALDSACAATSSCIHLACMSLIARDIDMAVAGAANVLSTPHSFTSLSRSGVLSDSGNCKTYRDDADGYCRADFSGAVVLKRLDDAIAHNDNILAVISSSARNHSGNSTSITTSDAAAQERLFHKVLRNARVTPEDISYVEMHGTGTQVGDKAEMGAVSSVFSKRRDGELLPVGAIKANLGHSEAAAGMSSLLKSILMFQKGTIPPQAGMPHTLNPNFPPLHEINIKIPEEPLEFKSVGGKPRRILLNNFDAAGGNACLLLEDYTHTKEREADVRSAHTIVTSARTQASHLLNKQRLLKWLRSNPNTRIEDLAYTTTARRMHHPIRFALTASTTQEAISKLESEIERNTNSPASRHVPVVFVFTGQGSHYAGMGAELYRTSSAFRERVDLCVDICAGNNFAPFVDIITDEGVDVSSKTAAQVQLAVLTLEMALTHFWRLAGIEPAMVMGHSLGEYAALHAAGVLSLADALYLVGHRALILQERCESGSCSMLSVSTSVANVREQLSQLQSSSCGVACINSPSSTVVSGIAEDLAEFQANITAQDAKVRTKTLSIPFAFHSFQMDPILQDYGTIAAGVTFSAPKIPVASTLLGSIVGEPGVFDHDYLVQQTRQPVNFVGGLNAVQSKLSDPLWLEIGPSPVCVSFVRDTLSPSLSKLTHTLQPNTHNWASISKSLAAAYINGVDIDWVALHAPYETNLQLLTLPSYAWDVKDYWITHTDRVTEAVPEQSPVTGSGPLVSTCAQYLVSKSSSPKVQVVFRASISDPGFMELIDGHKMQGIGLCSGSVFCEAAFAAAKYALEYSGRRNVTQPWLTLQKPELLLPLTKKLAGADGSLITTAVMDSPSAHRISVTFKLTSGSESHELGSCIVNFRDPAKTQADWDRVSYFIQARMDEVIKNAKEGPGHRMQPEVFYALFANAVEFSTDFQGVDEAYIAKDFQEAAALVTLPHDPAGTKFTFSPYWGEALVHLAGFMVNGNPSKSPQKTFIVMGFESVEQTVPLVPGKKYMAYTRISKWVKETAYCDAVVFDPETSNIILQCIDLRYQELPRVTWKHVLDGPHGGSSAHGHKAPVQETKKAVEVSRQAVAVAPVQPQPAEVGEDDDDDFDEGLVDAILDSISKATGSDPSEFTDDTIVADLGVDSIMAIEVVATVKEQSGLDLPATFVLEHPTIGDLRRAFGANKPKTSKPQPGSTTPSSSQSSIPSSPNPEPTSMSDTASSLGSSLVDIEKDQTFTPPPELEPKPNHHLGKMDETDTSPAPTVRITLLQGRPSPKRTPFYMMADGTGTIATYIHLPAFKSKMPVYGIDSPFLRCPSRLTKDVGIPGVAKLIVDALVTAQPTGPLMIGGFSAGSIVAYEVTRQLGALGRQVTGLVLIDMCCPRSSLLDEDAMNSEDDASFAIFENAVSKDGLWSLASTTQDHFRAYHVAMHAYHPPYMTAQERPSHTAVIWAEKGMVNRVVGNDRLMQMLADQGIPTTSYPGYMEDPRLGAFACLVPDRTAADLGPNGWEKYTAGEVLALSVAGDHLDLPMPGHVHLLQREMEKAFAYFEGEST.

The N-terminal acylcarrier protein transacylase domain (SAT) stretch occupies residues 9–246 (LLFGDVTDPW…NELDIHALQH (238 aa)). The 433-residue stretch at 366–798 (RDGIAIVGMA…GGNACLLLED (433 aa)) folds into the Ketosynthase family 3 (KS3) domain. Active-site for beta-ketoacyl synthase activity residues include Cys543, His678, and His717. A malonyl-CoA:ACP transacylase (MAT) domain region spans residues 895–1201 (VFVFTGQGSH…THTLQPNTHN (307 aa)). The active-site For acyl/malonyl transferase activity is the Ser986. An N-terminal hotdog fold region spans residues 1276–1415 (AQYLVSKSSS…DPAKTQADWD (140 aa)). The PKS/mFAS DH domain maps to 1276–1585 (AQYLVSKSSS…YQELPRVTWK (310 aa)). The interval 1285–1581 (SPKVQVVFRA…IDLRYQELPR (297 aa)) is product template (PT) domain. The C-terminal hotdog fold stretch occupies residues 1437 to 1585 (GHRMQPEVFY…YQELPRVTWK (149 aa)). In terms of domain architecture, Carrier spans 1637 to 1714 (DFDEGLVDAI…DLRRAFGANK (78 aa)). Ser1674 carries the O-(pantetheine 4'-phosphoryl)serine modification. The disordered stretch occupies residues 1710 to 1790 (FGANKPKTSK…KMDETDTSPA (81 aa)). The segment covering 1718-1736 (SKPQPGSTTPSSSQSSIPS) has biased composition (low complexity). Residues 1745–1754 (MSDTASSLGS) are compositionally biased toward polar residues. The span at 1771 to 1784 (LEPKPNHHLGKMDE) shows a compositional bias: basic and acidic residues. The thioesterase (TE) domain stretch occupies residues 1811–2058 (MMADGTGTIA…LSVAGDHLDL (248 aa)). Residue His2065 is the For thioesterase activity of the active site.

It participates in mycotoxin biosynthesis. Non-reducing polyketide synthase; part of the gene cluster that mediates the biosynthesis of 10,11-dehydrocurvularin, a prevalent fungal phytotoxin with heat shock response and immune-modulatory activities. The highly reducing polyketide synthase curS1 is responsible for biosynthesis up to the tetraketide stage. The non-reducing polyketide synthase curS2 then conducts four additional chain extension cycles, producing the unreduced part of the nascent octaketide from C-1 to C-8 in 10,11-dehydrocurvularin. This Aspergillus terreus protein is Non-reducing polyketide synthase curS2.